The following is a 2549-amino-acid chain: Serine/threonine-protein kinase mTOR (2549 aa).

M1 carries the N-acetylmethionine modification. Residues 1-651 are interaction with NBN; that stretch reads MLGTGPAVAT…HVVSQTAVQV (651 aa). HEAT repeat units lie at residues 16–53, 55–99, 100–137, 138–179, 180–220, 222–276, 277–313, 314–364, 365–409, 410–445, 446–494, 495–529, 530–563, 564–596, 597–636, 637–683, 686–724, 727–766, 769–811, 814–853, 857–893, 894–942, 943–988, 989–1027, 1029–1068, 1069–1105, 1106–1144, 1145–1188, 1189–1225, 1226–1273, 1274–1311, and 1312–1345; these read SSNV…MELR, MSQE…VEGG, NSTR…AMAG, DTFT…AISV, PTFF…LILT, QREP…RISS, MEGE…PRHI, TPFT…CCRD, LMEE…AFTD, TQYL…VAVR, SEFK…RAMG, PGIQ…RQIP, QLKK…GLAH, QLAS…EFEG, HSLT…SIHL, ISGH…DERF, HLAQ…MNPA, MPFL…NAPR, RPYM…VSGL, RKWV…STGY, PYRK…LLGA, LDPY…GNLP, LDEF…KCVQ, FLPQ…KSHI, PYMD…GEFK, LYLP…LFGA, NLDD…RLTE, SLDF…GKKY, QIFI…LADE, EEDP…GAAR, RVSK…QAYN, and PMAR…ELAL. S567 bears the Phosphoserine mark. The residue at position 1162 (T1162) is a Phosphothreonine. Residue K1218 is modified to N6-acetyllysine. S1261 is modified (phosphoserine). 16 TPR repeats span residues 1346-1382, 1383-1408, 1409-1442, 1443-1473, 1474-1507, 1508-1541, 1542-1574, 1575-1614, 1615-1649, 1650-1693, 1694-1731, 1732-1786, 1787-1846, 1898-1930, 1931-1970, and 1971-2005; these read TSQD…GIVL, LGER…QKGP, TPAI…HFGE, LEIQ…NKED, PELM…VNDE, TQAK…RDTH, DGAF…LDAE, LTAM…RREI, IRQI…PHED, MRTW…PTAH, PQVT…AQHA, IATE…DRSW, YKAW…STEG, NNLQ…VKAI, QIDT…YHPQ, and ALIY…SNTL. The 601-residue stretch at 1382-1982 folds into the FAT domain; that stretch reads LLGERAAKCR…IYPLTVASKS (601 aa). 3 residues coordinate 1D-myo-inositol hexakisphosphate: K1662, K1702, and R1749. Positions 1825 to 1860 are enriched in low complexity; that stretch reads ITNATTAATTAASAAAATSTEGSNSESEAESNENSP. A disordered region spans residues 1825 to 1867; sequence ITNATTAATTAASAAAATSTEGSNSESEAESNENSPTPSPLQK. A sufficient for interaction with the FKBP1A/rapamycin complex region spans residues 2012-2144; that stretch reads VSEELIRVAI…DLELAVPGTY (133 aa). K2066 is covalently cross-linked (Glycyl lysine isopeptide (Lys-Gly) (interchain with G-Cter in ubiquitin)). A PI3K/PI4K catalytic domain is found at 2156-2469; that stretch reads IAPSLQVITS…GVELGEPAHK (314 aa). Position 2159 is a phosphoserine; by TBK1 (S2159). The tract at residues 2162 to 2168 is G-loop; the sequence is VITSKQR. T2164 carries the post-translational modification Phosphothreonine. ATP is bound by residues S2165 and Q2167. Position 2173 is a phosphothreonine; by PKB/AKT1 (T2173). ATP contacts are provided by L2185, K2187, E2190, Y2225, G2238, W2239, V2240, and T2245. An interaction with MLST8 region spans residues 2258–2296; that stretch reads KILLNIEHRIMLRMAPDYDHLTLMQKVEVFEHAVNNTAG. A catalytic loop region spans residues 2335–2343; it reads GLGDRHPSN. N2343 provides a ligand contact to Mg(2+). Residues M2345 and I2356 each coordinate ATP. Residues 2355-2380 are activation loop; the sequence is HIDFGDCFEVAMTREKFPEKIPFRLT. D2357 lines the Mg(2+) pocket. T2446 bears the Phosphothreonine; by RPS6KB1 mark. A Phosphoserine; by RPS6KB1 modification is found at S2448. 2 positions are modified to phosphoserine: S2478 and S2481. The FATC domain occupies 2517-2549; that stretch reads DTLDVPTQVELLIKQATSHENLCQCYIGWCPFW.

It belongs to the PI3/PI4-kinase family. In terms of assembly, part of the mechanistic target of rapamycin complex 1 (mTORC1) which contains MTOR, MLST8 and RPTOR. The mTORC1 complex is a 1 Md obligate dimer of two stoichiometric heterotetramers with overall dimensions of 290 A x 210 A x 135 A. It has a rhomboid shape and a central cavity, the dimeric interfaces are formed by interlocking interactions between the two MTOR and the two RPTOR subunits. The MLST8 subunit forms distal foot-like protuberances, and contacts only one MTOR within the complex, while the small AKT1S1/PRAS40 localizes to the midsection of the central core, in close proximity to RPTOR. mTORC1 associates with AKT1S1/PRAS40, which inhibits its activity by blocking MTOR substrate-recruitment site. Component of the mechanistic target of rapamycin complex 2 (mTORC2), consisting in two heterotretramers composed of MTOR, MLST8, RICTOR and MAPKAP1/SIN1. Interacts with PLPP7 and PML. Interacts with PRR5 and RICTOR; the interaction is direct within the mTORC2 complex and interaction with RICTOR is enhanced by deubiquitination of RICTOR by USP9X. mTORC1 and mTORC2 associate with DEPTOR, which regulates their activity. Interacts with WAC; WAC positively regulates MTOR activity by promoting the assembly of the TTT complex composed of TELO2, TTI1 and TTI2 and the RUVBL complex composed of RUVBL1 and RUVBL2 into the TTT-RUVBL complex which leads to the dimerization of the mTORC1 complex and its subsequent activation. Interacts with UBQLN1. Interacts with TTI1 and TELO2. Interacts with CLIP1; phosphorylates and regulates CLIP1. Interacts with NBN. Interacts with HTR6. Interacts with BRAT1. Interacts with MEAK7 (via C-terminal domain); the interaction increases upon nutrient stimulation. Interacts with TM4SF5; the interaction is positively regulated by arginine and is negatively regulated by leucine. Interacts with GPR137B. Interacts with NCKAP1L. Interacts with TPCN1 and TPCN2; the interaction is required for TPCN1 and TPCN2 sensitivity to ATP. Interacts with ATP6V1A and with CRYAB, forming a ternary complex. Interacts with SLC38A7; this interaction mediates the recruitment of mTORC1 to the lysosome and its subsequent activation. Interacts with TSPAN8. Autophosphorylates when part of mTORC1 or mTORC2. Phosphorylation at Ser-1261, Ser-2159 and Thr-2164 promotes autophosphorylation. Phosphorylated at Ser-2448 by RPS6KB1. Phosphorylation in the kinase domain modulates the interactions of MTOR with RPTOR and AKT1S1/PRAS40 and leads to increased intrinsic mTORC1 kinase activity. Phosphorylation at Ser-2159 by TBK1 in response to growth factors and pathogen recognition receptors promotes mTORC1 activity. Phosphorylation at Ser-2159 by TBK1 in response to EGF growth factor promotes mTORC2 activity, leading to AKT1 phosphorylation and activation. Phosphorylation at Thr-2173 in the ATP-binding region by AKT1 strongly reduces kinase activity. Post-translationally, ubiquitinated at Lys-2066 by the SCF(FBXO22) complex via 'Lys-27'-linked ubiquitination prevents mTORC1 substrate recruitment.

The protein localises to the lysosome membrane. The protein resides in the endoplasmic reticulum membrane. It localises to the golgi apparatus membrane. Its subcellular location is the cell membrane. It is found in the mitochondrion outer membrane. The protein localises to the cytoplasm. The protein resides in the nucleus. It localises to the PML body. Its subcellular location is the microsome membrane. It is found in the cytoplasmic vesicle. The protein localises to the phagosome. The catalysed reaction is L-seryl-[protein] + ATP = O-phospho-L-seryl-[protein] + ADP + H(+). It carries out the reaction L-threonyl-[protein] + ATP = O-phospho-L-threonyl-[protein] + ADP + H(+). The enzyme catalyses L-tyrosyl-[protein] + ATP = O-phospho-L-tyrosyl-[protein] + ADP + H(+). With respect to regulation, the mTORC1 complex is activated in response to nutrients, growth factors or amino acids: activation requires relocalization of the mTORC1 complex to lysosomes that is mediated by the Ragulator complex, SLC38A9, and the Rag GTPases RagA/RRAGA, RagB/RRAGB, RagC/RRAGC and RagD/RRAGD. Activation of mTORC1 by growth factors such as insulin involves AKT1-mediated phosphorylation of TSC1-TSC2, which leads to the activation of the RHEB GTPase a potent activator of the protein kinase activity of mTORC1. Insulin-stimulated and amino acid-dependent phosphorylation at Ser-1261 promotes autophosphorylation and the activation of mTORC1. On the other hand, low cellular energy levels can inhibit mTORC1 through activation of PRKAA1 while hypoxia inhibits mTORC1 through a REDD1-dependent mechanism which may also require PRKAA1. The kinase activity of MTOR within the mTORC1 complex is positively regulated by MLST8. The kinase activity of MTOR is inhibited by DEPTOR and AKT1S1. The non-canonical mTORC1 complex is independent of the RHEB GTPase and specifically mediates phosphorylation of MiT/TFE factors TFEB and TFE3 but not other mTORC1 substrates: it is activated by FLCN, which activates Rag GTPases RagC/RRAGC and RagD/RRAGD. MTOR is the target of the immunosuppressive and anti-cancer drug rapamycin which acts in complex with FKBP1A/FKBP12, and specifically inhibits its kinase activity. mTORC2 is also activated by growth factors, but seems to be nutrient-insensitive. mTORC2 associates and is directly activated by ribosomes. mTORC2 may also be regulated by RHEB but in an indirect manner through the PI3K signaling pathway. Functionally, serine/threonine protein kinase which is a central regulator of cellular metabolism, growth and survival in response to hormones, growth factors, nutrients, energy and stress signals. MTOR directly or indirectly regulates the phosphorylation of at least 800 proteins. Functions as part of 2 structurally and functionally distinct signaling complexes mTORC1 and mTORC2 (mTOR complex 1 and 2). In response to nutrients, growth factors or amino acids, mTORC1 is recruited to the lysosome membrane and promotes protein, lipid and nucleotide synthesis by phosphorylating key regulators of mRNA translation and ribosome synthesis. This includes phosphorylation of EIF4EBP1 and release of its inhibition toward the elongation initiation factor 4E (eiF4E). Moreover, phosphorylates and activates RPS6KB1 and RPS6KB2 that promote protein synthesis by modulating the activity of their downstream targets including ribosomal protein S6, eukaryotic translation initiation factor EIF4B, and the inhibitor of translation initiation PDCD4. Stimulates the pyrimidine biosynthesis pathway, both by acute regulation through RPS6KB1-mediated phosphorylation of the biosynthetic enzyme CAD, and delayed regulation, through transcriptional enhancement of the pentose phosphate pathway which produces 5-phosphoribosyl-1-pyrophosphate (PRPP), an allosteric activator of CAD at a later step in synthesis, this function is dependent on the mTORC1 complex. Regulates ribosome synthesis by activating RNA polymerase III-dependent transcription through phosphorylation and inhibition of MAF1 an RNA polymerase III-repressor. Activates dormant ribosomes by mediating phosphorylation of SERBP1, leading to SERBP1 inactivation and reactivation of translation. In parallel to protein synthesis, also regulates lipid synthesis through SREBF1/SREBP1 and LPIN1. To maintain energy homeostasis mTORC1 may also regulate mitochondrial biogenesis through regulation of PPARGC1A. In the same time, mTORC1 inhibits catabolic pathways: negatively regulates autophagy through phosphorylation of ULK1. Under nutrient sufficiency, phosphorylates ULK1 at 'Ser-758', disrupting the interaction with AMPK and preventing activation of ULK1. Also prevents autophagy through phosphorylation of the autophagy inhibitor DAP. Also prevents autophagy by phosphorylating RUBCNL/Pacer under nutrient-rich conditions. Prevents autophagy by mediating phosphorylation of AMBRA1, thereby inhibiting AMBRA1 ability to mediate ubiquitination of ULK1 and interaction between AMBRA1 and PPP2CA. mTORC1 exerts a feedback control on upstream growth factor signaling that includes phosphorylation and activation of GRB10 a INSR-dependent signaling suppressor. Among other potential targets mTORC1 may phosphorylate CLIP1 and regulate microtubules. The mTORC1 complex is inhibited in response to starvation and amino acid depletion. The non-canonical mTORC1 complex, which acts independently of RHEB, specifically mediates phosphorylation of MiT/TFE factors TFEB and TFE3 in the presence of nutrients, promoting their cytosolic retention and inactivation. Upon starvation or lysosomal stress, inhibition of mTORC1 induces dephosphorylation and nuclear translocation of TFEB and TFE3, promoting their transcription factor activity. The mTORC1 complex regulates pyroptosis in macrophages by promoting GSDMD oligomerization. MTOR phosphorylates RPTOR which in turn inhibits mTORC1. As part of the mTORC2 complex, MTOR transduces signals from growth factors to pathways involved in proliferation, cytoskeletal organization, lipogenesis and anabolic output. In response to growth factors, mTORC2 phosphorylates and activates AGC protein kinase family members, including AKT (AKT1, AKT2 and AKT3), PKC (PRKCA, PRKCB and PRKCE) and SGK1. In contrast to mTORC1, mTORC2 is nutrient-insensitive. mTORC2 plays a critical role in AKT1 activation by mediating phosphorylation of different sites depending on the context, such as 'Thr-450', 'Ser-473', 'Ser-477' or 'Thr-479', facilitating the phosphorylation of the activation loop of AKT1 on 'Thr-308' by PDPK1/PDK1 which is a prerequisite for full activation. mTORC2 also regulates the phosphorylation of SGK1 at 'Ser-422'. mTORC2 may regulate the actin cytoskeleton, through phosphorylation of PRKCA, PXN and activation of the Rho-type guanine nucleotide exchange factors RHOA and RAC1A or RAC1B. The mTORC2 complex also phosphorylates various proteins involved in insulin signaling, such as FBXW8 and IGF2BP1. May also regulate insulin signaling by acting as a tyrosine protein kinase that catalyzes phosphorylation of IGF1R and INSR. Regulates osteoclastogenesis by adjusting the expression of CEBPB isoforms. Plays an important regulatory role in the circadian clock function; regulates period length and rhythm amplitude of the suprachiasmatic nucleus (SCN) and liver clocks. The chain is Serine/threonine-protein kinase mTOR from Mus musculus (Mouse).